A 621-amino-acid chain; its full sequence is Chaperone protein HtpG (621 aa).

The a; substrate-binding stretch occupies residues 1 to 328; it reads MKQEKKKFDA…SEDLPLNISR (328 aa). Residues 329 to 544 are b; sequence ESLQHNNVLE…EAAMDIRMER (216 aa). The disordered stretch occupies residues 479–498; that stretch reads VDQATSSSEEKNKDDKKSDD. Residues 486-498 are compositionally biased toward basic and acidic residues; the sequence is SEEKNKDDKKSDD. The segment at 545–621 is c; that stretch reads FLIEQKQIAN…LNDIVQKAIL (77 aa).

It belongs to the heat shock protein 90 family. Homodimer.

The protein resides in the cytoplasm. Its function is as follows. Molecular chaperone. Has ATPase activity. The chain is Chaperone protein HtpG from Rickettsia bellii (strain OSU 85-389).